Here is a 483-residue protein sequence, read N- to C-terminus: Probable pectate lyase 12 (483 aa).

An N-terminal signal peptide occupies residues 1 to 24 (MMLQRSCIVLFFSLFLLVPQMVFS). 2 N-linked (GlcNAc...) asparagine glycosylation sites follow: asparagine 27 and asparagine 50. Residues aspartate 220, aspartate 244, and aspartate 248 each contribute to the Ca(2+) site. Arginine 300 is an active-site residue.

Belongs to the polysaccharide lyase 1 family. The cofactor is Ca(2+).

It catalyses the reaction Eliminative cleavage of (1-&gt;4)-alpha-D-galacturonan to give oligosaccharides with 4-deoxy-alpha-D-galact-4-enuronosyl groups at their non-reducing ends.. The protein operates within glycan metabolism; pectin degradation; 2-dehydro-3-deoxy-D-gluconate from pectin: step 2/5. This is Probable pectate lyase 12 from Arabidopsis thaliana (Mouse-ear cress).